The primary structure comprises 490 residues: Cytochrome P450 2W1 (490 aa).

An N-terminal signal peptide occupies residues Met1 to Ala22. Asn177 carries an N-linked (GlcNAc...) asparagine glycan. A heme-binding site is contributed by Cys433.

Belongs to the cytochrome P450 family. Heme serves as cofactor. Very low levels are detected in fetal and adult tissues. Highly expressed in several tumor samples, in particular colon and adrenal tumors.

The protein resides in the endoplasmic reticulum lumen. It localises to the cell membrane. It is found in the microsome membrane. It carries out the reaction all-trans-retinoate + reduced [NADPH--hemoprotein reductase] + O2 = all-trans-4-hydroxyretinoate + oxidized [NADPH--hemoprotein reductase] + H2O + H(+). The catalysed reaction is 1-(9Z-octadecenoyl)-sn-glycero-3-phosphocholine + reduced [NADPH--hemoprotein reductase] + O2 = 1-[8-hydroxy-(9Z)-octadecenoyl]-sn-glycero-3-phosphocholine + oxidized [NADPH--hemoprotein reductase] + H2O + H(+). The enzyme catalyses 1-(9Z-octadecenoyl)-sn-glycero-3-phosphocholine + reduced [NADPH--hemoprotein reductase] + O2 = 1-[11-hydroxy-(9Z)-octadecenoyl]-sn-glycero-3-phosphocholine + oxidized [NADPH--hemoprotein reductase] + H2O + H(+). It catalyses the reaction 1-(9Z-octadecenoyl)-sn-glycero-3-phosphocholine + reduced [NADPH--hemoprotein reductase] + O2 = 1-[(9S,10R)-epoxy-octadecanoyl]-sn-glycero-3-phosphocholine + oxidized [NADPH--hemoprotein reductase] + H2O + H(+). It carries out the reaction 1-(9Z-octadecenoyl)-sn-glycero-3-phosphocholine + reduced [NADPH--hemoprotein reductase] + O2 = 1-[(9R,10S)-epoxy-octadecanoyl]-sn-glycero-3-phosphocholine + oxidized [NADPH--hemoprotein reductase] + H2O + H(+). Functionally, a cytochrome P450 monooxygenase that may play a role in retinoid and phospholipid metabolism. Catalyzes the hydroxylation of saturated carbon hydrogen bonds. Hydroxylates all trans-retinoic acid (atRA) to 4-hydroxyretinoate and may regulate atRA clearance. Other retinoids such as all-trans retinol and all-trans retinal are potential endogenous substrates. Catalyzes both epoxidation of double bonds and hydroxylation of carbon hydrogen bonds of the fatty acyl chain of 1-acylphospholipids/2-lysophospholipids. Can metabolize various lysophospholipids classes including lysophosphatidylcholines (LPCs), lysophosphatidylinositols (LPIs), lysophosphatidylserines (LPSs), lysophosphatidylglycerols (LPGs), lysophosphatidylethanolamines (LPEs) and lysophosphatidic acids (LPAs). Has low or no activity toward 2-acylphospholipids/1-lysophospholipids, diacylphospholipids and free fatty acids. May play a role in tumorigenesis by activating procarcinogens such as aflatoxin B1, polycyclic aromatic hydrocarbon dihydrodiols and aromatic amines. Mechanistically, uses molecular oxygen inserting one oxygen atom into a substrate, and reducing the second into a water molecule, with two electrons provided by NADPH via cytochrome P450 reductase (CPR; NADPH-ferrihemoprotein reductase). This is Cytochrome P450 2W1 from Homo sapiens (Human).